We begin with the raw amino-acid sequence, 154 residues long: 6,7-dimethyl-8-ribityllumazine synthase (154 aa).

Residues phenylalanine 22, 56-58 (AFE), and 80-82 (TVI) contribute to the 5-amino-6-(D-ribitylamino)uracil site. 85-86 (ST) lines the (2S)-2-hydroxy-3-oxobutyl phosphate pocket. The active-site Proton donor is histidine 88. A 5-amino-6-(D-ribitylamino)uracil-binding site is contributed by phenylalanine 113. Residue arginine 127 coordinates (2S)-2-hydroxy-3-oxobutyl phosphate.

This sequence belongs to the DMRL synthase family.

It catalyses the reaction (2S)-2-hydroxy-3-oxobutyl phosphate + 5-amino-6-(D-ribitylamino)uracil = 6,7-dimethyl-8-(1-D-ribityl)lumazine + phosphate + 2 H2O + H(+). It participates in cofactor biosynthesis; riboflavin biosynthesis; riboflavin from 2-hydroxy-3-oxobutyl phosphate and 5-amino-6-(D-ribitylamino)uracil: step 1/2. Catalyzes the formation of 6,7-dimethyl-8-ribityllumazine by condensation of 5-amino-6-(D-ribitylamino)uracil with 3,4-dihydroxy-2-butanone 4-phosphate. This is the penultimate step in the biosynthesis of riboflavin. The chain is 6,7-dimethyl-8-ribityllumazine synthase from Lactococcus lactis subsp. lactis (strain IL1403) (Streptococcus lactis).